The chain runs to 214 residues: Thymidylate kinase (214 aa).

ATP is bound at residue 10–17 (GGEGAGKS).

This sequence belongs to the thymidylate kinase family.

The catalysed reaction is dTMP + ATP = dTDP + ADP. Phosphorylation of dTMP to form dTDP in both de novo and salvage pathways of dTTP synthesis. In Brucella suis biovar 1 (strain 1330), this protein is Thymidylate kinase.